An 86-amino-acid chain; its full sequence is Small ribosomal subunit protein bS20 (86 aa).

Belongs to the bacterial ribosomal protein bS20 family.

Binds directly to 16S ribosomal RNA. The polypeptide is Small ribosomal subunit protein bS20 (Oceanobacillus iheyensis (strain DSM 14371 / CIP 107618 / JCM 11309 / KCTC 3954 / HTE831)).